A 512-amino-acid polypeptide reads, in one-letter code: Tyrosine-protein kinase Lyn (512 aa).

The interval Met1–Glu62 is disordered. The N-myristoyl glycine moiety is linked to residue Gly2. The S-palmitoyl cysteine moiety is linked to residue Cys3. 2 positions are modified to phosphoserine: Ser11 and Ser13. The region spanning Glu63–Thr123 is the SH3 domain. Residues Trp129–Cys226 form the SH2 domain. The residue at position 193 (Tyr193) is a Phosphotyrosine. Position 228 is a phosphoserine (Ser228). The Protein kinase domain occupies Ile247–Tyr501. Residues Leu253–Val261 and Lys275 each bind ATP. Phosphotyrosine occurs at positions 306 and 316. Asp367 serves as the catalytic Proton acceptor. Tyr397 is subject to Phosphotyrosine; by autocatalysis. A phosphotyrosine mark is found at Tyr460 and Tyr473. Position 508 is a phosphotyrosine; by autocatalysis, CSK and MATK (Tyr508).

Belongs to the protein kinase superfamily. Tyr protein kinase family. SRC subfamily. Interacts with TEC. Interacts (via SH2 domain) with FLT3 (tyrosine phosphorylated). Interacts with LIME1 and with CD79A upon activation of the B-cell antigen receptor. Interacts with the B-cell receptor complex. Interacts with phosphorylated THEMIS2. Interacts with EPOR. Interacts with MS4A2/FCER1B. Interaction (via the SH2 and SH3 domains) with MUC1 is stimulated by IL7 and the subsequent phosphorylation increases the binding between MUC1 and CTNNB1/beta-catenin. Interacts with ADAM15. Interacts with NDFIP2 and more weakly with NDFIP1. Interacts with FASLG. Interacts with KIT. Interacts with HCLS1. Interacts with FCGR2B. Interacts with FCGR1A; the interaction may be indirect. Interacts with CD19, CD22, CD79A and CD79B. Interacts (via SH3 domain) with CBLC, PPP1R15A and PDE4A. Interacts with TGFB1I1. Interacts (via SH3 domain) with PIK3R1, the regulatory subunit of phosphatidylinositol 3-kinase; this interaction enhances phosphatidylinositol 3-kinase activity. Interacts with CSF2RB, the common subunit of the IL3, IL5 and CSF2 receptors. Interacts with PAG1; identified in a complex with PAG1 and STAT3. Interacts with ABL1. Interacts with PTPN6/SHP-1. Interacts (via SH3 domain) with SCIMP (via proline-rich region). This interaction facilitates the phosphorylation of SCIMP on 'Tyr-107', which enhances binding of SCIMP to TLR4, and consequently the phosphorylation of TLR4 in response to stimulation by lipopolysaccharide in macrophages. Interacts with LPXN (via LD motif 3) and the interaction is induced upon B-cell antigen receptor (BCR) activation. Interacts (via SH3-domain) with ANKRD54 (via ankyrin repeat region) in an activation-independent status of LYN. Forms a multiprotein complex with ANKRD54 and HCLS1. Interacts (via SH2 and SH3 domains) with UNC119; leading to LYN activation. Interacts with CD36. Interacts with LYN. Interacts with SKAP1 and FYB1; this interaction promotes the phosphorylation of CLNK. Interacts with BCAR1/CAS and NEDD9/HEF1. In terms of assembly, (Microbial infection) Interacts with Epstein-Barr virus LMP2A. As to quaternary structure, (Microbial infection) Interacts with Herpes virus saimiri tyrosine kinase interacting protein (Tip). Ubiquitinated by CBL, leading to its degradation. Ubiquitination is SH3-dependent. Post-translationally, autophosphorylated. Phosphorylated on tyrosine residues in response to KIT signaling. Phosphorylation at Tyr-397 is required for optimal activity. Phosphorylation at Tyr-508 inhibits kinase activity. Phosphorylated at Tyr-508 by CSK. Dephosphorylated by PTPRC/CD45. Becomes rapidly phosphorylated upon activation of the B-cell receptor and the immunoglobulin receptor FCGR1A. Phosphorylated in response to ITGB1 in B-cells. As to expression, detected in monocytes (at protein level). Detected in placenta, and in fetal brain, lung, liver and kidney. Widely expressed in a variety of organs, tissues, and cell types such as epidermoid, hematopoietic, and neuronal cells. Expressed in primary neuroblastoma tumors.

It localises to the cell membrane. The protein resides in the nucleus. Its subcellular location is the cytoplasm. It is found in the perinuclear region. The protein localises to the golgi apparatus. It localises to the membrane. It carries out the reaction L-tyrosyl-[protein] + ATP = O-phospho-L-tyrosyl-[protein] + ADP + H(+). Its activity is regulated as follows. Subject to autoinhibition, mediated by intramolecular interactions between the SH2 domain and the C-terminal phosphotyrosine. Phosphorylation at Tyr-397 is required for optimal activity. Phosphorylated by CSK at Tyr-508; phosphorylation at Tyr-508 inhibits kinase activity. Kinase activity is modulated by dephosphorylation by PTPRC/CD45. Inhibited by Dasatinib, PP2, and SU6656. Functionally, non-receptor tyrosine-protein kinase that transmits signals from cell surface receptors and plays an important role in the regulation of innate and adaptive immune responses, hematopoiesis, responses to growth factors and cytokines, integrin signaling, but also responses to DNA damage and genotoxic agents. Functions primarily as negative regulator, but can also function as activator, depending on the context. Required for the initiation of the B-cell response, but also for its down-regulation and termination. Plays an important role in the regulation of B-cell differentiation, proliferation, survival and apoptosis, and is important for immune self-tolerance. Acts downstream of several immune receptors, including the B-cell receptor, CD79A, CD79B, CD5, CD19, CD22, FCER1, FCGR2, FCGR1A, TLR2 and TLR4. Plays a role in the inflammatory response to bacterial lipopolysaccharide. Mediates the responses to cytokines and growth factors in hematopoietic progenitors, platelets, erythrocytes, and in mature myeloid cells, such as dendritic cells, neutrophils and eosinophils. Acts downstream of EPOR, KIT, MPL, the chemokine receptor CXCR4, as well as the receptors for IL3, IL5 and CSF2. Plays an important role in integrin signaling. Regulates cell proliferation, survival, differentiation, migration, adhesion, degranulation, and cytokine release. Involved in the regulation of endothelial activation, neutrophil adhesion and transendothelial migration. Down-regulates signaling pathways by phosphorylation of immunoreceptor tyrosine-based inhibitory motifs (ITIM), that then serve as binding sites for phosphatases, such as PTPN6/SHP-1, PTPN11/SHP-2 and INPP5D/SHIP-1, that modulate signaling by dephosphorylation of kinases and their substrates. Phosphorylates LIME1 in response to CD22 activation. Phosphorylates BTK, CBL, CD5, CD19, CD72, CD79A, CD79B, CSF2RB, DOK1, HCLS1, LILRB3/PIR-B, MS4A2/FCER1B, SYK and TEC. Promotes phosphorylation of SIRPA, PTPN6/SHP-1, PTPN11/SHP-2 and INPP5D/SHIP-1. Mediates phosphorylation of the BCR-ABL fusion protein. Required for rapid phosphorylation of FER in response to FCER1 activation. Mediates KIT phosphorylation. Acts as an effector of EPOR (erythropoietin receptor) in controlling KIT expression and may play a role in erythroid differentiation during the switch between proliferation and maturation. Depending on the context, activates or inhibits several signaling cascades. Regulates phosphatidylinositol 3-kinase activity and AKT1 activation. Regulates activation of the MAP kinase signaling cascade, including activation of MAP2K1/MEK1, MAPK1/ERK2, MAPK3/ERK1, MAPK8/JNK1 and MAPK9/JNK2. Mediates activation of STAT5A and/or STAT5B. Phosphorylates LPXN on 'Tyr-72'. Kinase activity facilitates TLR4-TLR6 heterodimerization and signal initiation. Phosphorylates SCIMP on 'Tyr-107'; this enhances binding of SCIMP to TLR4, promoting the phosphorylation of TLR4, and a selective cytokine response to lipopolysaccharide in macrophages. Phosphorylates CLNK. Phosphorylates BCAR1/CAS and NEDD9/HEF1. The chain is Tyrosine-protein kinase Lyn (LYN) from Homo sapiens (Human).